The sequence spans 586 residues: CTP synthase (586 aa).

Positions 1-278 (MRKHPQTATK…DAFVVRRLNL (278 aa)) are amidoligase domain. Serine 20 is a CTP binding site. Serine 20 is a UTP binding site. Residues 21–26 (SLGKGL) and aspartate 78 each bind ATP. Mg(2+)-binding residues include aspartate 78 and glutamate 152. CTP is bound by residues 159–161 (DIE), 199–204 (KTKPTQ), and lysine 235. Residues 199 to 204 (KTKPTQ) and lysine 235 contribute to the UTP site. The Glutamine amidotransferase type-1 domain maps to 303-551 (RIALVGKYVE…VGAAIDYKAG (249 aa)). Position 366 (glycine 366) interacts with L-glutamine. Cysteine 393 functions as the Nucleophile; for glutamine hydrolysis in the catalytic mechanism. L-glutamine-binding positions include 394 to 397 (LGLQ), glutamate 416, and arginine 477. Active-site residues include histidine 524 and glutamate 526. Residues 560 to 586 (EIPEHTPNGSSHRDGVGQPLPEPASRG) form a disordered region.

This sequence belongs to the CTP synthase family. In terms of assembly, homotetramer.

The enzyme catalyses UTP + L-glutamine + ATP + H2O = CTP + L-glutamate + ADP + phosphate + 2 H(+). The catalysed reaction is L-glutamine + H2O = L-glutamate + NH4(+). It catalyses the reaction UTP + NH4(+) + ATP = CTP + ADP + phosphate + 2 H(+). Its pathway is pyrimidine metabolism; CTP biosynthesis via de novo pathway; CTP from UDP: step 2/2. With respect to regulation, allosterically activated by GTP, when glutamine is the substrate; GTP has no effect on the reaction when ammonia is the substrate. The allosteric effector GTP functions by stabilizing the protein conformation that binds the tetrahedral intermediate(s) formed during glutamine hydrolysis. Inhibited by the product CTP, via allosteric rather than competitive inhibition. Functionally, catalyzes the ATP-dependent amination of UTP to CTP with either L-glutamine or ammonia as the source of nitrogen. Regulates intracellular CTP levels through interactions with the four ribonucleotide triphosphates. The protein is CTP synthase of Mycobacterium tuberculosis (strain ATCC 25177 / H37Ra).